Here is a 289-residue protein sequence, read N- to C-terminus: Probable endonuclease 4 (289 aa).

Zn(2+) is bound by residues His75, His115, Glu153, Asp187, His190, His224, Asp237, His239, and Glu269.

This sequence belongs to the AP endonuclease 2 family. Requires Zn(2+) as cofactor.

It carries out the reaction Endonucleolytic cleavage to 5'-phosphooligonucleotide end-products.. In terms of biological role, endonuclease IV plays a role in DNA repair. It cleaves phosphodiester bonds at apurinic or apyrimidinic (AP) sites, generating a 3'-hydroxyl group and a 5'-terminal sugar phosphate. The sequence is that of Probable endonuclease 4 from Chlamydia abortus (strain DSM 27085 / S26/3) (Chlamydophila abortus).